The sequence spans 720 residues: GTPase-activating protein gyp2 (720 aa).

Residues 20-85 (LDPASFFRIN…AAVRKLEREN (66 aa)) form the GRAM domain. The 189-residue stretch at 216 to 404 (GIPNNLRADI…RILDCLFVNG (189 aa)) folds into the Rab-GAP TBC domain.

The protein resides in the cytoplasm. Its subcellular location is the nucleus. Its function is as follows. Stimulates specifically the GTPase activity of ypt2 and ryh1. Inactivates ryh1 during recycling between the endosome and the Golgi compartments. This is GTPase-activating protein gyp2 from Schizosaccharomyces pombe (strain 972 / ATCC 24843) (Fission yeast).